We begin with the raw amino-acid sequence, 267 residues long: Orotidine 5'-phosphate decarboxylase (267 aa).

Serine 2 is subject to N-acetylserine. Residues aspartate 37, 59-61, and 91-100 each bind substrate; these read KTH and DRKFADIGNT. Residue lysine 93 is the Proton donor of the active site. Residues lysine 93 and lysine 209 each participate in a glycyl lysine isopeptide (Lys-Gly) (interchain with G-Cter in ubiquitin) cross-link. Substrate contacts are provided by tyrosine 217 and arginine 235. Lysine 253 participates in a covalent cross-link: Glycyl lysine isopeptide (Lys-Gly) (interchain with G-Cter in ubiquitin).

The protein belongs to the OMP decarboxylase family.

It carries out the reaction orotidine 5'-phosphate + H(+) = UMP + CO2. Its pathway is pyrimidine metabolism; UMP biosynthesis via de novo pathway; UMP from orotate: step 2/2. In Saccharomyces cerevisiae (strain ATCC 204508 / S288c) (Baker's yeast), this protein is Orotidine 5'-phosphate decarboxylase (URA3).